Consider the following 500-residue polypeptide: Cytochrome P450 81F1 (500 aa).

A helical transmembrane segment spans residues 1–21; the sequence is MLYFILLPLLFLVISYKFLYS. Residue Lys-248 forms a Glycyl lysine isopeptide (Lys-Gly) (interchain with G-Cter in ubiquitin) linkage. A heme-binding site is contributed by Cys-438.

The protein belongs to the cytochrome P450 family. Heme is required as a cofactor.

Its subcellular location is the membrane. The protein operates within secondary metabolite biosynthesis. In terms of biological role, involved in indole glucosinolate biosynthesis. Catalyzes hydroxylation reactions of the glucosinolate indole ring. Converts indol-3-yl-methylglucosinolate (I3M) to 4-hydroxy-indol-3-yl-methylglucosinolate (4OH-I3M) and/or 1-hydroxy-indol-3-yl-methylglucosinolate (1OH-I3M) intermediates. These hydroxy intermediates are converted to 4-methoxy-indol-3-yl-methylglucosinolate (4MO-I3M) and 1-methoxy-indol-3-yl-methylglucosinolate (1MO-I3M) by indole glucosinolate methyltransferase 1 and 2 (IGMT1 and IGMT2). This chain is Cytochrome P450 81F1, found in Arabidopsis thaliana (Mouse-ear cress).